Here is a 101-residue protein sequence, read N- to C-terminus: Putative defensin-like protein 253 (101 aa).

Residues M1–C23 form the signal peptide. 4 disulfides stabilise this stretch: C31–C84, C41–C66, C49–C76, and C64–C78.

It belongs to the DEFL family.

The protein localises to the secreted. This is Putative defensin-like protein 253 (SCRL15) from Arabidopsis thaliana (Mouse-ear cress).